Reading from the N-terminus, the 317-residue chain is Methionyl-tRNA formyltransferase (317 aa).

111-114 (SLLP) is a (6S)-5,6,7,8-tetrahydrofolate binding site.

Belongs to the Fmt family.

It carries out the reaction L-methionyl-tRNA(fMet) + (6R)-10-formyltetrahydrofolate = N-formyl-L-methionyl-tRNA(fMet) + (6S)-5,6,7,8-tetrahydrofolate + H(+). Functionally, attaches a formyl group to the free amino group of methionyl-tRNA(fMet). The formyl group appears to play a dual role in the initiator identity of N-formylmethionyl-tRNA by promoting its recognition by IF2 and preventing the misappropriation of this tRNA by the elongation apparatus. The sequence is that of Methionyl-tRNA formyltransferase from Chlorobium phaeobacteroides (strain BS1).